The following is a 130-amino-acid chain: Phosphoribosyl-AMP cyclohydrolase (130 aa).

Position 77 (Asp77) interacts with Mg(2+). Cys78 contacts Zn(2+). Mg(2+) contacts are provided by Asp79 and Asp81. Zn(2+) is bound by residues Cys95 and Cys102.

This sequence belongs to the PRA-CH family. Homodimer. It depends on Mg(2+) as a cofactor. Zn(2+) serves as cofactor.

The protein resides in the cytoplasm. It catalyses the reaction 1-(5-phospho-beta-D-ribosyl)-5'-AMP + H2O = 1-(5-phospho-beta-D-ribosyl)-5-[(5-phospho-beta-D-ribosylamino)methylideneamino]imidazole-4-carboxamide. Its pathway is amino-acid biosynthesis; L-histidine biosynthesis; L-histidine from 5-phospho-alpha-D-ribose 1-diphosphate: step 3/9. Functionally, catalyzes the hydrolysis of the adenine ring of phosphoribosyl-AMP. This chain is Phosphoribosyl-AMP cyclohydrolase, found in Pseudomonas syringae pv. syringae (strain B728a).